We begin with the raw amino-acid sequence, 360 residues long: Phosphoserine aminotransferase (360 aa).

Arg42 provides a ligand contact to L-glutamate. Trp102, Thr152, Asp171, and Gln194 together coordinate pyridoxal 5'-phosphate. N6-(pyridoxal phosphate)lysine is present on Lys195. Position 237–238 (237–238) interacts with pyridoxal 5'-phosphate; sequence NT.

This sequence belongs to the class-V pyridoxal-phosphate-dependent aminotransferase family. SerC subfamily. In terms of assembly, homodimer. It depends on pyridoxal 5'-phosphate as a cofactor.

It is found in the cytoplasm. It carries out the reaction O-phospho-L-serine + 2-oxoglutarate = 3-phosphooxypyruvate + L-glutamate. It catalyses the reaction 4-(phosphooxy)-L-threonine + 2-oxoglutarate = (R)-3-hydroxy-2-oxo-4-phosphooxybutanoate + L-glutamate. It participates in amino-acid biosynthesis; L-serine biosynthesis; L-serine from 3-phospho-D-glycerate: step 2/3. Its pathway is cofactor biosynthesis; pyridoxine 5'-phosphate biosynthesis; pyridoxine 5'-phosphate from D-erythrose 4-phosphate: step 3/5. Functionally, catalyzes the reversible conversion of 3-phosphohydroxypyruvate to phosphoserine and of 3-hydroxy-2-oxo-4-phosphonooxybutanoate to phosphohydroxythreonine. The polypeptide is Phosphoserine aminotransferase (Coxiella burnetii (strain Dugway 5J108-111)).